A 497-amino-acid polypeptide reads, in one-letter code: Glycine receptor subunit beta (497 aa).

The signal sequence occupies residues 1-22 (MKFLLTTAFLILISLWVEEAYS). At 23 to 268 (KEKSSKKGKG…IFTLRRQVGF (246 aa)) the chain is on the extracellular side. Residue Asn-54 is glycosylated (N-linked (GlcNAc...) asparagine). 2 residues coordinate glycine: Arg-108 and Ser-174. Cys-183 and Cys-197 form a disulfide bridge. Asn-242 carries an N-linked (GlcNAc...) asparagine glycan. A disulfide bond links Cys-243 and Cys-255. Thr-250 provides a ligand contact to glycine. A helical transmembrane segment spans residues 269–289 (YMMGVYAPTLLIVVLSWLSFW). Topologically, residues 290-294 (INPDA) are cytoplasmic. The helical transmembrane segment at 295-315 (SAARVPLGIFSVLSLASECTT) threads the bilayer. Residues 316–327 (LAAELPKVSYVK) are Extracellular-facing. Residues 328–349 (ALDVWLIACLLFGFASLVEYAV) traverse the membrane as a helical segment. Residues 350 to 472 (VQVMLNNPKR…KPVIPTAAKR (123 aa)) lie on the Cytoplasmic side of the membrane. Thr-391 is subject to Phosphothreonine. The chain crosses the membrane as a helical span at residues 473 to 496 (IDLYARALFPFCFLFFNVIYWSIY).

It belongs to the ligand-gated ion channel (TC 1.A.9) family. Glycine receptor (TC 1.A.9.3) subfamily. GLRB sub-subfamily. In terms of assembly, forms heteropentamers with glycin receptor alpha subunits. Heteropentamers with GLRA1 can be composed of two GLRA1 and three GLRB subunits, or three GLRA1 and two GLRB subunits, or four GLRA1 subunits and one GLRB subunit. Forms heteropentamers with GLRA2. Functional GLRB-GLRA2 heteropentamers contain four GLRA2 subunits and one GLRB subunit, although alternative subunit composition cannot be excluded. Forms a heteropentamer with GLRA3. Interacts with GPHN.

The protein resides in the postsynaptic cell membrane. The protein localises to the synapse. It is found in the cell projection. It localises to the dendrite. Its subcellular location is the cell membrane. The protein resides in the cytoplasm. The catalysed reaction is chloride(in) = chloride(out). Its activity is regulated as follows. Channel opening is triggered by extracellular glycine. Heteropentameric channels composed of GLRB and GLRA1 are activated by lower glycine levels than homopentameric GLRA1. In terms of biological role, subunit of heteromeric glycine-gated chloride channels. Plays an important role in the down-regulation of neuronal excitability. Contributes to the generation of inhibitory postsynaptic currents. This chain is Glycine receptor subunit beta (GLRB), found in Homo sapiens (Human).